Here is a 387-residue protein sequence, read N- to C-terminus: Alkanesulfonate monooxygenase (387 aa).

This sequence belongs to the SsuD family.

The enzyme catalyses an alkanesulfonate + FMNH2 + O2 = an aldehyde + FMN + sulfite + H2O + 2 H(+). Catalyzes the desulfonation of aliphatic sulfonates. The chain is Alkanesulfonate monooxygenase from Ralstonia nicotianae (strain ATCC BAA-1114 / GMI1000) (Ralstonia solanacearum).